The primary structure comprises 279 residues: Syntaxin-21 (279 aa).

A disordered region spans residues methionine 1–glutamine 34. Serine 2 carries the N-acetylserine modification. Residues serine 2 to leucine 258 lie on the Cytoplasmic side of the membrane. Residues glycine 21–aspartate 31 are compositionally biased toward polar residues. Positions glutamate 65–alanine 94 form a coiled coil. Positions glutamate 186–alanine 248 constitute a t-SNARE coiled-coil homology domain. Residues threonine 259–valine 279 traverse the membrane as a helical; Anchor for type IV membrane protein segment.

The protein belongs to the syntaxin family. As to quaternary structure, interacts with VTI11 and SYP51 to form a t-SNARE complex and with alpha-SNAP to form a 20S complex. In terms of tissue distribution, a high level expression is seen in the roots while a low level expression is seen in the leaves.

Its subcellular location is the prevacuolar compartment membrane. May function in the docking or fusion of transport vesicles with the prevacuolar membrane. The protein is Syntaxin-21 (SYP21) of Arabidopsis thaliana (Mouse-ear cress).